We begin with the raw amino-acid sequence, 416 residues long: Type II methyltransferase M.PspPI (416 aa).

The SAM-dependent MTase C5-type domain maps to 77 to 410 (YSLVELFAGA…KAIIRMLNAA (334 aa)). Cysteine 149 is a catalytic residue.

This sequence belongs to the class I-like SAM-binding methyltransferase superfamily. C5-methyltransferase family.

It catalyses the reaction a 2'-deoxycytidine in DNA + S-adenosyl-L-methionine = a 5-methyl-2'-deoxycytidine in DNA + S-adenosyl-L-homocysteine + H(+). In terms of biological role, a methylase, recognizes the double-stranded sequence 5'-GGNCC-3', methylates C-4 on both strands, and protects the DNA from cleavage by the PspPI endonuclease. The protein is Type II methyltransferase M.PspPI of Psychrobacter sp. (strain TA137).